The primary structure comprises 513 residues: NAD(P)H-quinone oxidoreductase subunit 2, chloroplastic (513 aa).

Helical transmembrane passes span 11–31 (NLIT…ILMI), 38–58 (SVWL…ILLF), 78–98 (GFTI…IPLS), 112–132 (FLIL…ANDL), 133–153 (VTIF…AGQA), 167–187 (LLMG…LYGL), 219–239 (FGAL…GFKI), 256–276 (PTPV…ALAT), 290–310 (WHIV…LIAA), 318–338 (MLAY…LVGN), 348–368 (YLLI…IFGL), 389–409 (AFAL…AGFF), 422–442 (HLYL…YYYL), and 478–498 (LGLT…NPLI).

It belongs to the complex I subunit 2 family. In terms of assembly, NDH is composed of at least 16 different subunits, 5 of which are encoded in the nucleus.

The protein localises to the plastid. The protein resides in the chloroplast thylakoid membrane. It catalyses the reaction a plastoquinone + NADH + (n+1) H(+)(in) = a plastoquinol + NAD(+) + n H(+)(out). It carries out the reaction a plastoquinone + NADPH + (n+1) H(+)(in) = a plastoquinol + NADP(+) + n H(+)(out). Functionally, NDH shuttles electrons from NAD(P)H:plastoquinone, via FMN and iron-sulfur (Fe-S) centers, to quinones in the photosynthetic chain and possibly in a chloroplast respiratory chain. The immediate electron acceptor for the enzyme in this species is believed to be plastoquinone. Couples the redox reaction to proton translocation, and thus conserves the redox energy in a proton gradient. The protein is NAD(P)H-quinone oxidoreductase subunit 2, chloroplastic of Staurastrum punctulatum (Green alga).